Reading from the N-terminus, the 447-residue chain is Rab GDP dissociation inhibitor alpha (447 aa).

It belongs to the Rab GDI family. As to quaternary structure, interacts with RHOH. Interacts with the non-phosphorylated forms of RAB1A, RAB3A, RAB5A, RAB5B, RAB5C, RAB8A, RAB8B, RAB10, RAB12, RAB35, and RAB43.

Its subcellular location is the cytoplasm. The protein resides in the golgi apparatus. It is found in the trans-Golgi network. Its function is as follows. Regulates the GDP/GTP exchange reaction of most Rab proteins by inhibiting the dissociation of GDP from them, and the subsequent binding of GTP to them. Promotes the dissociation of GDP-bound Rab proteins from the membrane and inhibits their activation. Promotes the dissociation of RAB1A, RAB3A, RAB5A and RAB10 from membranes. This chain is Rab GDP dissociation inhibitor alpha (GDI1), found in Macaca fascicularis (Crab-eating macaque).